Reading from the N-terminus, the 263-residue chain is Hydroxyethylthiazole kinase (263 aa).

Met39 contacts substrate. 2 residues coordinate ATP: Lys115 and Thr160. Residue Gly187 participates in substrate binding.

It belongs to the Thz kinase family. It depends on Mg(2+) as a cofactor.

The catalysed reaction is 5-(2-hydroxyethyl)-4-methylthiazole + ATP = 4-methyl-5-(2-phosphooxyethyl)-thiazole + ADP + H(+). It functions in the pathway cofactor biosynthesis; thiamine diphosphate biosynthesis; 4-methyl-5-(2-phosphoethyl)-thiazole from 5-(2-hydroxyethyl)-4-methylthiazole: step 1/1. Catalyzes the phosphorylation of the hydroxyl group of 4-methyl-5-beta-hydroxyethylthiazole (THZ). The protein is Hydroxyethylthiazole kinase of Staphylococcus saprophyticus subsp. saprophyticus (strain ATCC 15305 / DSM 20229 / NCIMB 8711 / NCTC 7292 / S-41).